The chain runs to 2774 residues: Teneurin-2 (2774 aa).

The Teneurin N-terminal domain maps to 1–375; it reads MDVKDRRHRS…KPSKYCSWKC (375 aa). Topologically, residues 1–379 are cytoplasmic; it reads MDVKDRRHRS…YCSWKCAALS (379 aa). S90 and S124 each carry phosphoserine. Residues 111 to 271 are disordered; the sequence is TGSDADSDTE…HHHSSANSLN (161 aa). A compositionally biased stretch (polar residues) spans 141 to 155; that stretch reads SSGLSSRENSALTLT. Residue T155 is modified to Phosphothreonine. S157 carries the phosphoserine modification. Residues 159–168 are compositionally biased toward basic and acidic residues; it reads NENKSDDENG. Positions 176–188 are enriched in low complexity; that stretch reads SPSLLPSAQLPSS. Residues 202-211 show a composition bias toward polar residues; the sequence is DSNTSHQIMD. Low complexity predominate over residues 229 to 240; the sequence is SGPQQASSSGPP. Residues 380–400 traverse the membrane as a helical segment; the sequence is AIAAALLLAILLAYFIAMHLL. Residues 401–2774 are Extracellular-facing; the sequence is GLNWQLQPAD…FLRQNEMGKR (2374 aa). N-linked (GlcNAc...) asparagine glycans are attached at residues N443 and N482. 8 consecutive EGF-like domains span residues 575 to 603, 598 to 634, 636 to 668, 669 to 701, 702 to 735, 738 to 766, 769 to 797, and 808 to 841; these read DCPR…ADCA, LGAD…AECD, PMNQ…EHCE, EVDC…NCEL, ARVQ…PDCS, VCSV…AACD, VCHP…EHCT, and DGCP…PGCN. 22 disulfide bridges follow: C576/C586, C580/C591, C593/C602, C611/C622, C624/C633, C640/C651, C645/C656, C658/C667, C672/C683, C677/C688, C690/C699, C710/C723, C725/C734, C739/C749, C743/C754, C756/C765, C770/C780, C774/C785, C787/C796, C810/C820, C814/C829, and C831/C840. N-linked (GlcNAc...) asparagine glycosylation is found at N925, N948, and N1267. NHL repeat units lie at residues 1272–1316, 1342–1386, 1401–1452, 1474–1501, and 1530–1573; these read LELR…VKSL, ARCG…NGII, LSCD…IAGR, LESA…INRL, and CYSG…VSKN. Residues 1583 to 1602 form a YD 1 repeat; that stretch reads YEAASPGEQELYVFNADGIH. A glycan (N-linked (GlcNAc...) asparagine) is linked at N1616. YD repeat units follow at residues 1619–1639, 1682–1701, and 1702–1724; these read YSTD…LKIR, YDGN…WTTF, and YDYD…TSLH. N1712, N1749, N1773, N1807, and N1892 each carry an N-linked (GlcNAc...) asparagine glycan. 18 YD repeats span residues 1895 to 1914, 1936 to 1954, 1955 to 1975, 1982 to 1999, 2000 to 2021, 2022 to 2039, 2042 to 2062, 2065 to 2085, 2093 to 2113, 2119 to 2136, 2137 to 2163, 2165 to 2178, 2179 to 2202, 2205 to 2225, 2226 to 2246, 2248 to 2268, 2280 to 2300, and 2302 to 2322; these read YFFN…ERTD, YLDK…YIFE, YDSS…HSMS, YIRN…VIFD, YSDD…VFYK, YGKL…TAVT, YDET…FSCT, YRKI…EGMV, YHDN…TPLP, YDEI…GVIY, YDIN…IKEV, YEMF…MTVQ, YDSM…TKYT, YDGD…WRYS, YDLN…LMPL, YDLR…DDDG, YNSK…SVQY, and YDGV…LQYF. An N-linked (GlcNAc...) asparagine glycan is attached at N1993. Residue N2197 is glycosylated (N-linked (GlcNAc...) asparagine). Residue N2337 is glycosylated (N-linked (GlcNAc...) asparagine). A YD 23 repeat occupies 2348–2389; it reads YDLQGHLFAMESSSGEEYYVASDNTGTPLAVFSINGLMIKQL. A glycan (N-linked (GlcNAc...) asparagine) is linked at N2648.

It belongs to the tenascin family. Teneurin subfamily. In terms of assembly, homodimer; disulfide-linked. Heterodimer with either TENM1 or TENM3. May also form heterodimer with TENM4. Isoform 2 (C-terminal globular domain) interacts with ADGRL1 isoform 2. Post-translationally, derives from the membrane form by proteolytic processing. Derives from the plasma membrane form by proteolytic cleavage and translocates to the nucleus. Homophilic binding of the C-terminal extracellular domain stimulates its proteolytic cleavage and release in the cytoplasmic. Is subjected to rapid degradation by the proteasome pathway. As to expression, highly expressed in heart, followed by brain, liver, kidney and fetal brain and weakly expressed in lung and testis. No expression was detected in skeletal muscle, pancreas, spleen, ovary and fetal liver.

It is found in the cell membrane. The protein localises to the presynaptic cell membrane. Its subcellular location is the postsynaptic cell membrane. The protein resides in the endoplasmic reticulum. It localises to the golgi apparatus. It is found in the synapse. The protein localises to the cell projection. Its subcellular location is the dendritic spine. The protein resides in the filopodium. It localises to the growth cone. It is found in the nucleus. The protein localises to the PML body. Functionally, involved in neural development, regulating the establishment of proper connectivity within the nervous system. Acts as a ligand of the ADGRL1 and ADGRL3 receptors that are expressed at the surface of adjacent cells. Promotes the formation of filopodia and enlarged growth cone in neuronal cells. Mediates axon guidance and homophilic and heterophilic cell-cell adhesion. May function as a cellular signal transducer. Acts as a ligand of the ADGRL1 receptor. Mediates axon guidance and heterophilic cell-cell adhesion. Its function is as follows. Induces gene transcription inhibition. The chain is Teneurin-2 (TENM2) from Homo sapiens (Human).